The primary structure comprises 646 residues: Capsid scaffolding protein (646 aa).

Active-site charge relay system residues include His-55, Ser-123, and His-142. Residues 336–355 (GDYILVPAAQYNQLVVGQHT) are interaction with pAP. Positions 421 to 483 (TKGSDPHVIQ…RPGERRAGRP (63 aa)) are disordered. Positions 445 to 451 (RYARKRR) match the Nuclear localization signal motif. 2 stretches are compositionally biased toward basic and acidic residues: residues 452–462 (HDWDATTRDDL) and 471–480 (RSPRPGERRA). An interaction with major capsid protein region spans residues 626–646 (TGLEFGRDDADIFVSQMMSAR).

This sequence belongs to the herpesviridae capsid scaffolding protein family. Homomultimer. Interacts with major capsid protein. As to quaternary structure, exists in a monomer-dimer equilibrium with the dimer being the active species. In terms of processing, capsid scaffolding protein is cleaved by assemblin after formation of the spherical procapsid. As a result, the capsid obtains its mature, icosahedral shape. Cleavages occur at two or more sites: release (R-site) and maturation (M-site).

Its subcellular location is the host cytoplasm. The protein localises to the host nucleus. The enzyme catalyses Cleaves -Ala-|-Ser- and -Ala-|-Ala- bonds in the scaffold protein.. Acts as a scaffold protein by binding major capsid protein in the cytoplasm, inducing the nuclear localization of both proteins. Multimerizes in the nucleus such as major capsid protein forms the icosahedral T=16 capsid. Autocatalytic cleavage releases the assembly protein, and subsequently abolishes interaction with major capsid protein. Cleavages products are evicted from the capsid before or during DNA packaging. Functionally, protease that plays an essential role in virion assembly within the nucleus. Catalyzes the cleavage of the assembly protein after formation of the spherical procapsid. By that cleavage, the capsid matures and gains its icosahedral shape. The cleavage sites seem to include -Ala-Ser-, -Ala-Ala-, as well as Ala-Thr bonds. Assemblin and cleavages products are evicted from the capsid before or during DNA packaging. Its function is as follows. Plays a major role in capsid assembly. Acts as a scaffold protein by binding major capsid protein. Multimerizes in the nucleus such as major capsid protein forms the icosahedral T=16 capsid. Cleaved by assemblin after capsid completion. The cleavages products are evicted from the capsid before or during DNA packaging. In Equus caballus (Horse), this protein is Capsid scaffolding protein (35).